The primary structure comprises 91 residues: ATP synthase epsilon chain (91 aa).

The protein belongs to the ATPase epsilon chain family. In terms of assembly, F-type ATPases have 2 components, CF(1) - the catalytic core - and CF(0) - the membrane proton channel. CF(1) has five subunits: alpha(3), beta(3), gamma(1), delta(1), epsilon(1). CF(0) has three main subunits: a, b and c.

The protein resides in the cell membrane. In terms of biological role, produces ATP from ADP in the presence of a proton gradient across the membrane. The chain is ATP synthase epsilon chain (atpC) from Micrococcus luteus (strain ATCC 4698 / DSM 20030 / JCM 1464 / CCM 169 / CCUG 5858 / IAM 1056 / NBRC 3333 / NCIMB 9278 / NCTC 2665 / VKM Ac-2230) (Micrococcus lysodeikticus).